The chain runs to 77 residues: MKNSSIMFVLIVVFLISSSENQKMVGEAKQCKTGWACFGEDACKEKCMAKYKGVGTVTYFPFPPETIIIYCECLYDC.

The N-terminal stretch at 1–19 (MKNSSIMFVLIVVFLISSS) is a signal peptide. 3 cysteine pairs are disulfide-bonded: Cys-31/Cys-77, Cys-43/Cys-71, and Cys-47/Cys-73.

The protein belongs to the DEFL family.

Its subcellular location is the secreted. The polypeptide is Putative defensin-like protein 187 (LCR42) (Arabidopsis thaliana (Mouse-ear cress)).